Consider the following 604-residue polypeptide: MSSMRIYVAIMKKPSVKHVDNVDKKASKPSWRVSSSATAGLRASSSLQLDVKKPADEILTARRSGNYQPSLWDFNYLQPLNTTHYKEERHLKREAELIEQVKMLLEEEMEAVQQLELVDDLKNLGLSYFFEDQIKQILTFIYNEHKCFRSNVEAEERDLYFTALGFRLLRQHGFQVSQEVFDCFKNEEGSDFKASLGDDTKGLVQLYEASFLLREGEDTLELARQYATKFLQKKVDHELIDDDNNLLSWIRHSLEIPLHWRIQRLEARWFLDAYATRHDVNPIILELAKLDFNIIQATQQEELKDLSRWWNSTCLAEKLPFVRDRLVESYFWAIALFEPHQYGYHRKIAAKIITLITSLDDVYDIYGTLDELQLFTDAIQRWDTESISRLPYYMQLFYMVLYNFVSELAYDGLKEKGFITIPYLQRSWADLVEAYLKEAKWFYNGYTPSMEEYLNNAYISIGATPVISQVFFTLATSIDKPVIESLYEYHRILRLSGMLVRLPDDLGTSPFEMKRGDVPKAILLYMKERNATEIEAQEHVRFLIREAWKEMNTATAAADCPLTDDLVAAAANLGRAAQFMYLDGDGNHSQLHQRIASLLFEPYA.

The transit peptide at 1-34 directs the protein to the chloroplast; the sequence is MSSMRIYVAIMKKPSVKHVDNVDKKASKPSWRVS. (2E)-geranyl diphosphate is bound by residues arginine 323, aspartate 360, aspartate 364, arginine 501, and aspartate 504. Mg(2+)-binding residues include aspartate 360 and aspartate 364. Residues 360-364 carry the DDXXD motif motif; sequence DDVYD. Mg(2+) is bound by residues aspartate 504, threonine 508, and glutamate 512.

The protein belongs to the terpene synthase family. Tpsb subfamily. Monomer. Mg(2+) is required as a cofactor. Mn(2+) serves as cofactor.

The protein localises to the plastid. Its subcellular location is the chloroplast. The catalysed reaction is (2E)-geranyl diphosphate + H2O = linalool + diphosphate. The protein operates within secondary metabolite biosynthesis; terpenoid biosynthesis. Monoterpene synthase (mono-TPS) involved in the biosynthesis of monoterpenes natural products. Catalyzes the conversion of (2E)-geranyl diphosphate (GPP) into linalool. In Perilla frutescens (Beefsteak mint), this protein is Linalool synthase Tps-5042L13, chloroplastic.